Here is a 467-residue protein sequence, read N- to C-terminus: Asparagine--tRNA ligase (467 aa).

This sequence belongs to the class-II aminoacyl-tRNA synthetase family. As to quaternary structure, homodimer.

It localises to the cytoplasm. The enzyme catalyses tRNA(Asn) + L-asparagine + ATP = L-asparaginyl-tRNA(Asn) + AMP + diphosphate + H(+). The protein is Asparagine--tRNA ligase of Bacteroides fragilis (strain ATCC 25285 / DSM 2151 / CCUG 4856 / JCM 11019 / LMG 10263 / NCTC 9343 / Onslow / VPI 2553 / EN-2).